Here is a 1210-residue protein sequence, read N- to C-terminus: Histone-lysine N-methyltransferase EHMT2 (1210 aa).

Low complexity predominate over residues 1–23 (MAAAAGAAAAAAAEGEAPAEMGA). Disordered stretches follow at residues 1–262 (MAAA…LEEW) and 280–386 (DERV…EYME). Ala-2 is modified (N-acetylalanine). Basic and acidic residues predominate over residues 26 to 38 (LEKETRGATERVH). Ser-40 bears the Phosphoserine mark. Thr-44 is modified (phosphothreonine). Phosphoserine is present on Ser-47. Positions 105 to 128 (GRILLGHATKSFPSSPSKGGSCPS) are enriched in low complexity. A Phosphoserine modification is found at Ser-140. The segment covering 155-165 (PGAQGAAAAGS) has biased composition (low complexity). Ser-173 is subject to Phosphoserine. The residue at position 185 (Lys-185) is an N6,N6,N6-trimethyllysine; by EHMT2; alternate. Lys-185 bears the N6,N6-dimethyllysine; by EHMT2; alternate mark. Over residues 198-216 (PEKRPPEIQHFRMSDDVHS) the composition is skewed to basic and acidic residues. Glycyl lysine isopeptide (Lys-Gly) (interchain with G-Cter in SUMO2) cross-links involve residues Lys-219 and Lys-229. Residues Ser-232, Ser-242, and Ser-246 each carry the phosphoserine modification. The segment covering 280–291 (DERVDSDSKSEV) has biased composition (basic and acidic residues). A compositionally biased stretch (acidic residues) spans 298 to 327 (LSEEEEEEEEEEEEEEEEEEEEEEEEDEES). Residues 338-347 (GRRKAKKKWR) show a composition bias toward basic residues. Ser-350, Ser-412, and Ser-413 each carry phosphoserine. Residues 548-608 (IPRGDGVTPP…LADTIDSSGP (61 aa)) form a disordered region. Thr-555 bears the Phosphothreonine mark. Phosphoserine is present on Ser-569. Lys-634 is covalently cross-linked (Glycyl lysine isopeptide (Lys-Gly) (interchain with G-Cter in SUMO2)). ANK repeat units follow at residues 649–678 (FHPR…DPNF), 684–713 (SKRT…NINA), 717–746 (QQRT…CVYS), 750–780 (DGST…DVNA), 784–813 (GGWT…DVTL), 817–846 (EENI…DLHA), and 850–879 (HGDT…NPEL). The histone H3K9me binding stretch occupies residues 817-819 (EEN). Residues 972–1035 (QHCTCVDDCS…NCKNRVVQSG (64 aa)) enclose the Pre-SET domain. Zn(2+) is bound by residues Cys-974, Cys-976, Cys-980, Cys-985, Cys-987, Cys-1017, Cys-1021, Cys-1023, and Cys-1027. The 118-residue stretch at 1038-1155 (VRLQLYRTAK…TGEELGFDYG (118 aa)) folds into the SET domain. S-adenosyl-L-methionine-binding positions include 1048 to 1050 (MGW), Tyr-1085, and 1112 to 1113 (NH). Residues 1074–1093 (DAEADVREDDSYLFDLDNKD) form an interaction with histone H3 region. Residue Cys-1115 coordinates Zn(2+). The interaction with histone H3 stretch occupies residues 1154 to 1157 (YGDR). A Post-SET domain is found at 1164 to 1180 (KYFTCQCGSEKCKHSAE). Cys-1168 serves as a coordination point for Zn(2+). Gln-1169 contacts S-adenosyl-L-methionine. Residues Cys-1170 and Cys-1175 each coordinate Zn(2+). Ser-1204 is subject to Phosphoserine. Thr-1210 bears the Phosphothreonine mark.

Belongs to the class V-like SAM-binding methyltransferase superfamily. Histone-lysine methyltransferase family. Suvar3-9 subfamily. In terms of assembly, heterodimer; heterodimerizes with EHMT1/GLP. Interacts with GFI1B and WIZ. Part of the E2F6.com-1 complex in G0 phase composed of E2F6, MGA, MAX, TFDP1, CBX3, BAT8, EHMT1, RING1, RNF2, MBLR, L3MBTL2 and YAF2. Part of a complex composed of TRIM28, HDAC1, HDAC2 and EHMT2. Interacts with UHRF1. Interacts with CDYL. Interacts with REST only in the presence of CDYL. Part of a complex containing at least CDYL, REST, WIZ, SETB1, EHMT1 and EHMT2. Interacts with PRDM9 and CDYL; interaction only takes place when PRDM9 is bound to hotspot DNA. Interacts with SMYD5. In terms of processing, methylated at Lys-185; automethylated. As to expression, expressed in all tissues examined, with high levels in fetal liver, thymus, lymph node, spleen and peripheral blood leukocytes and lower level in bone marrow.

Its subcellular location is the nucleus. The protein localises to the chromosome. It catalyses the reaction N(6)-methyl-L-lysyl(9)-[histone H3] + S-adenosyl-L-methionine = N(6),N(6)-dimethyl-L-lysyl(9)-[histone H3] + S-adenosyl-L-homocysteine + H(+). It carries out the reaction L-lysyl(9)-[histone H3] + S-adenosyl-L-methionine = N(6)-methyl-L-lysyl(9)-[histone H3] + S-adenosyl-L-homocysteine + H(+). Its function is as follows. Histone methyltransferase that specifically mono- and dimethylates 'Lys-9' of histone H3 (H3K9me1 and H3K9me2, respectively) in euchromatin. H3K9me represents a specific tag for epigenetic transcriptional repression by recruiting HP1 proteins to methylated histones. Also mediates monomethylation of 'Lys-56' of histone H3 (H3K56me1) in G1 phase, leading to promote interaction between histone H3 and PCNA and regulating DNA replication. Also weakly methylates 'Lys-27' of histone H3 (H3K27me). Also required for DNA methylation, the histone methyltransferase activity is not required for DNA methylation, suggesting that these 2 activities function independently. Probably targeted to histone H3 by different DNA-binding proteins like E2F6, MGA, MAX and/or DP1. May also methylate histone H1. In addition to the histone methyltransferase activity, also methylates non-histone proteins: mediates dimethylation of 'Lys-373' of p53/TP53. Also methylates CDYL, WIZ, ACIN1, DNMT1, HDAC1, ERCC6, KLF12 and itself. The sequence is that of Histone-lysine N-methyltransferase EHMT2 (EHMT2) from Homo sapiens (Human).